A 514-amino-acid chain; its full sequence is 2,3-bisphosphoglycerate-independent phosphoglycerate mutase (514 aa).

Residues Asp-14 and Ser-64 each contribute to the Mn(2+) site. Ser-64 (phosphoserine intermediate) is an active-site residue. Residues His-125, 155 to 156, Arg-187, Arg-193, 263 to 266, and Lys-336 each bind substrate; these read RD and RADR. 5 residues coordinate Mn(2+): Asp-403, His-407, Asp-444, His-445, and His-463.

This sequence belongs to the BPG-independent phosphoglycerate mutase family. Monomer. It depends on Mn(2+) as a cofactor.

It carries out the reaction (2R)-2-phosphoglycerate = (2R)-3-phosphoglycerate. It participates in carbohydrate degradation; glycolysis; pyruvate from D-glyceraldehyde 3-phosphate: step 3/5. Its function is as follows. Catalyzes the interconversion of 2-phosphoglycerate and 3-phosphoglycerate. The protein is 2,3-bisphosphoglycerate-independent phosphoglycerate mutase of Escherichia coli O6:H1 (strain CFT073 / ATCC 700928 / UPEC).